The chain runs to 254 residues: Ribonuclease HII (254 aa).

Residues 70–254 (QAIAGIDEVG…TFEPIKSMYE (185 aa)) enclose the RNase H type-2 domain. Residues aspartate 76, glutamate 77, and aspartate 168 each contribute to the a divalent metal cation site.

Belongs to the RNase HII family. The cofactor is Mn(2+). Requires Mg(2+) as cofactor.

It is found in the cytoplasm. The catalysed reaction is Endonucleolytic cleavage to 5'-phosphomonoester.. Functionally, endonuclease that specifically degrades the RNA of RNA-DNA hybrids. This chain is Ribonuclease HII, found in Streptococcus sanguinis (strain SK36).